A 407-amino-acid polypeptide reads, in one-letter code: Multifunctional CCA protein (407 aa).

Glycine 8 and arginine 11 together coordinate ATP. Positions 8 and 11 each coordinate CTP. 2 residues coordinate Mg(2+): aspartate 21 and aspartate 23. 3 residues coordinate ATP: arginine 91, arginine 137, and arginine 140. Arginine 91, arginine 137, and arginine 140 together coordinate CTP. The 102-residue stretch at 225-326 (CGDHVMRVLD…LRLLKDCDAL (102 aa)) folds into the HD domain.

This sequence belongs to the tRNA nucleotidyltransferase/poly(A) polymerase family. Bacterial CCA-adding enzyme type 1 subfamily. In terms of assembly, monomer. Can also form homodimers and oligomers. Mg(2+) is required as a cofactor. The cofactor is Ni(2+).

The catalysed reaction is a tRNA precursor + 2 CTP + ATP = a tRNA with a 3' CCA end + 3 diphosphate. It catalyses the reaction a tRNA with a 3' CCA end + 2 CTP + ATP = a tRNA with a 3' CCACCA end + 3 diphosphate. Its function is as follows. Catalyzes the addition and repair of the essential 3'-terminal CCA sequence in tRNAs without using a nucleic acid template. Adds these three nucleotides in the order of C, C, and A to the tRNA nucleotide-73, using CTP and ATP as substrates and producing inorganic pyrophosphate. tRNA 3'-terminal CCA addition is required both for tRNA processing and repair. Also involved in tRNA surveillance by mediating tandem CCA addition to generate a CCACCA at the 3' terminus of unstable tRNAs. While stable tRNAs receive only 3'-terminal CCA, unstable tRNAs are marked with CCACCA and rapidly degraded. In Chromobacterium violaceum (strain ATCC 12472 / DSM 30191 / JCM 1249 / CCUG 213 / NBRC 12614 / NCIMB 9131 / NCTC 9757 / MK), this protein is Multifunctional CCA protein.